Consider the following 123-residue polypeptide: Small ribosomal subunit protein uS12 (123 aa).

3-methylthioaspartic acid is present on D89.

Belongs to the universal ribosomal protein uS12 family. Part of the 30S ribosomal subunit. Contacts proteins S8 and S17. May interact with IF1 in the 30S initiation complex.

Functionally, with S4 and S5 plays an important role in translational accuracy. Interacts with and stabilizes bases of the 16S rRNA that are involved in tRNA selection in the A site and with the mRNA backbone. Located at the interface of the 30S and 50S subunits, it traverses the body of the 30S subunit contacting proteins on the other side and probably holding the rRNA structure together. The combined cluster of proteins S8, S12 and S17 appears to hold together the shoulder and platform of the 30S subunit. The chain is Small ribosomal subunit protein uS12 from Caulobacter sp. (strain K31).